A 330-amino-acid chain; its full sequence is Cyclic AMP receptor-like protein E (330 aa).

At 1–10 (MLSLSSYVLN) the chain is on the extracellular side. A helical transmembrane segment spans residues 11–31 (LVGSILCLIGCLFIIGHFFWI). Residues 32 to 40 (PLLRTSLSR) lie on the Cytoplasmic side of the membrane. Residues 41 to 61 (IIIYPTFILLLYDMVSFPSFI) form a helical membrane-spanning segment. Topologically, residues 62–85 (SKTADLYIERSTIICNFQEAIIQY) are extracellular. Residues 86–106 (LILSNFIWSVCISVNLLYLCF) traverse the membrane as a helical segment. The Cytoplasmic segment spans residues 107–116 (SPNKNLKKNE). Residues 117–137 (LLYHLCSWGIPLIVVVITKIP) form a helical membrane-spanning segment. At 138–156 (NMISDNGNQCRFKSPNYIK) the chain is on the extracellular side. A helical membrane pass occupies residues 157 to 177 (FYLETILFIAFMLFNFIVAFI). Residues 178-213 (TIKHIISGNLRESETTTTSVLFVNEKKITTKKIVWR) are Cytoplasmic-facing. A helical membrane pass occupies residues 214 to 234 (LLLYPSILSICYIMTLVLSIY). At 235–274 (QFSTESYGSGGAYANSINNKRNDKNTESGNSNNNNNSYIE) the chain is on the extracellular side. The N-linked (GlcNAc...) asparagine glycan is linked to N269. The chain crosses the membrane as a helical span at residues 275–295 (ILLYISKAIFLLQGFFNALVY). Residues 296–330 (LRSSKLRDRYKKITIFRKIFWRDEADYQSINDGFN) lie on the Cytoplasmic side of the membrane.

Belongs to the G-protein coupled receptor 5 family.

The protein resides in the membrane. Receptor for cAMP. The protein is Cyclic AMP receptor-like protein E (crlE) of Dictyostelium discoideum (Social amoeba).